We begin with the raw amino-acid sequence, 72 residues long: Conotoxin Gla(2)-TxVI/B (72 aa).

A signal peptide spans methionine 1 to alanine 19. Residues leucine 20–arginine 44 constitute a propeptide that is removed on maturation. Disulfide bonds link cysteine 48–cysteine 62, cysteine 55–cysteine 66, and cysteine 61–cysteine 70. 4-carboxyglutamate is present on glutamate 56. The residue at position 58 (proline 58) is a 4-hydroxyproline. Residue serine 71 is modified to Serine amide.

In terms of processing, brominated at one of the Trp residues. As to expression, expressed by the venom duct.

It localises to the secreted. The chain is Conotoxin Gla(2)-TxVI/B from Conus textile (Cloth-of-gold cone).